Here is an 873-residue protein sequence, read N- to C-terminus: Leucine--tRNA ligase (873 aa).

Residues 47-57 carry the 'HIGH' region motif; sequence PYPSGKLHMGH. The short motif at 636 to 640 is the 'KMSKS' region element; sequence KMSKS. Lysine 639 provides a ligand contact to ATP.

This sequence belongs to the class-I aminoacyl-tRNA synthetase family.

It is found in the cytoplasm. The enzyme catalyses tRNA(Leu) + L-leucine + ATP = L-leucyl-tRNA(Leu) + AMP + diphosphate. This chain is Leucine--tRNA ligase, found in Acinetobacter baylyi (strain ATCC 33305 / BD413 / ADP1).